Consider the following 235-residue polypeptide: Exosome complex component RRP46 (235 aa).

A disordered region spans residues 1 to 21; that stretch reads MEGAKRADANLLTDTGTESSP. Residues 12 to 21 show a composition bias toward polar residues; the sequence is LTDTGTESSP. 2 positions are modified to phosphoserine: serine 20 and serine 23.

Belongs to the RNase PH family. Homodimer. Component of the RNA exosome core complex (Exo-9), composed of EXOSC1, EXOSC2, EXOSC3, EXOSC4, EXOSC5, EXOSC6, EXOSC7, EXOSC8 and EXOSC9; within the complex interacts with EXOSC3, EXOSC8, and EXOSC9. The catalytically inactive RNA exosome core complex (Exo-9) associates with the catalytic subunit EXOSC10/RRP6. Exo-9 may associate with DIS3 to form the nucleolar exosome complex, or DIS3L to form the cytoplasmic exosome complex. Exo-9 is formed by a hexameric base ring consisting of the heterodimers EXOSC4-EXOSC9, EXOSC5-EXOSC8 and EXOSC6-EXOSC7, and a cap ring consisting of EXOSC1, EXOSC2 and EXOSC3. The RNA exosome complex associates with cofactors C1D/RRP47, MPHOSPH6/MPP6 and MTREX/MTR4. Interacts with GTPBP1. Interacts with ZC3HAV1. Interacts with DDX17 only in the presence of ZC3HAV1 in an RNA-independent manner.

It localises to the nucleus. The protein resides in the nucleolus. It is found in the cytoplasm. Its function is as follows. Non-catalytic component of the RNA exosome complex which has 3'-&gt;5' exoribonuclease activity and participates in a multitude of cellular RNA processing and degradation events. In the nucleus, the RNA exosome complex is involved in proper maturation of stable RNA species such as rRNA, snRNA and snoRNA, in the elimination of RNA processing by-products and non-coding 'pervasive' transcripts, such as antisense RNA species and promoter-upstream transcripts (PROMPTs), and of mRNAs with processing defects, thereby limiting or excluding their export to the cytoplasm. The RNA exosome may be involved in Ig class switch recombination (CSR) and/or Ig variable region somatic hypermutation (SHM) by targeting AICDA deamination activity to transcribed dsDNA substrates. In the cytoplasm, the RNA exosome complex is involved in general mRNA turnover and specifically degrades inherently unstable mRNAs containing AU-rich elements (AREs) within their 3' untranslated regions, and in RNA surveillance pathways, preventing translation of aberrant mRNAs. It seems to be involved in degradation of histone mRNA. The catalytic inactive RNA exosome core complex of 9 subunits (Exo-9) is proposed to play a pivotal role in the binding and presentation of RNA for ribonucleolysis, and to serve as a scaffold for the association with catalytic subunits and accessory proteins or complexes. In vitro, EXOSC5 does not bind or digest single-stranded RNA and binds to double-stranded DNA without detectable DNase activity. The chain is Exosome complex component RRP46 (Exosc5) from Mus musculus (Mouse).